We begin with the raw amino-acid sequence, 389 residues long: Phospho-N-acetylmuramoyl-pentapeptide-transferase (389 aa).

10 helical membrane-spanning segments follow: residues 25 to 45 (RAVMANLTALVIGLAAGPWVI), 74 to 94 (MGGVLVLVSIAISTVLWCDWG), 97 to 117 (FIWVVMLVTLGYGAIGWVDDY), 134 to 154 (FFWQTLIGLVAAVYLAFSVSE), 190 to 210 (VSYPLGVAGFIVLTYLVIVGS), 222 to 242 (GLVIMPVVLVGGALGAFAYVM), 259 to 279 (AGELLIFCSAMAGAGLAFLWF), 286 to 306 (VFMGDVGALALGGALGTVAVI), 311 to 331 (IVLFVMGGIFVVETVSVMLQV), and 366 to 386 (QVTVRFWIVTMLLVLIGLSTL).

The protein belongs to the glycosyltransferase 4 family. MraY subfamily. Mg(2+) is required as a cofactor.

The protein localises to the cell inner membrane. The enzyme catalyses UDP-N-acetyl-alpha-D-muramoyl-L-alanyl-gamma-D-glutamyl-meso-2,6-diaminopimeloyl-D-alanyl-D-alanine + di-trans,octa-cis-undecaprenyl phosphate = di-trans,octa-cis-undecaprenyl diphospho-N-acetyl-alpha-D-muramoyl-L-alanyl-D-glutamyl-meso-2,6-diaminopimeloyl-D-alanyl-D-alanine + UMP. It participates in cell wall biogenesis; peptidoglycan biosynthesis. In terms of biological role, catalyzes the initial step of the lipid cycle reactions in the biosynthesis of the cell wall peptidoglycan: transfers peptidoglycan precursor phospho-MurNAc-pentapeptide from UDP-MurNAc-pentapeptide onto the lipid carrier undecaprenyl phosphate, yielding undecaprenyl-pyrophosphoryl-MurNAc-pentapeptide, known as lipid I. The sequence is that of Phospho-N-acetylmuramoyl-pentapeptide-transferase from Cupriavidus pinatubonensis (strain JMP 134 / LMG 1197) (Cupriavidus necator (strain JMP 134)).